The sequence spans 47 residues: Laccase-2d (47 aa).

One can recognise a Plastocyanin-like domain in the interval 2–47; the sequence is TGPVADLHIINKDLSPDGFQRPTVVAGGGRDVVSIGRAGDNVTIRF.

It belongs to the multicopper oxidase family. In terms of assembly, homodimer. Cu cation is required as a cofactor. In terms of processing, N-glycosylated; contains 17% carbohydrates.

It localises to the secreted. The enzyme catalyses 4 hydroquinone + O2 = 4 benzosemiquinone + 2 H2O. With respect to regulation, inhibited by sodium azide, SDS and mercaptoethanol, but not by 4-hexyl resocinol, L-cysteine and dithiothreitol. Activity is inhibited by the heavy metal ions Cr, W, Sn, Ag(+) and Hg(2+), but not by Pb(2+), Fe(3+), Ni(2+), Li(2+), Co(2+) or Cd(2+). In terms of biological role, lignin degradation and detoxification of lignin-derived products. Has highest activity towards ABTS, also active towards ferulic acid and guaiacol, but is not active towards tyrosine, vanillic acid, 2,5-dimethyl aniline, p-anisidine or violuric acid. This chain is Laccase-2d, found in Cerrena unicolor (Canker rot fungus).